The primary structure comprises 345 residues: Growth hormone-inducible transmembrane protein (345 aa).

Residues 1-45 (MLAARLVCLRTLPSRVFHPAFTKASPVVKNSITKNQWLLTPSREY) constitute a mitochondrion transit peptide. The Mitochondrial matrix portion of the chain corresponds to 46 to 82 (ATKTRIGIRRGRTGQELKEAALEPSMEKIFKIDQMGR). Residues 83 to 103 (WFVAGGAAVGLGALCYYGLGL) form a helical membrane-spanning segment. Over 104–125 (SNEIGAIEKAVIWPQYVKDRIH) the chain is Mitochondrial intermembrane. The chain crosses the membrane as a helical span at residues 126–146 (STYMYLAGSIGLTALSAIAIS). The Mitochondrial matrix segment spans residues 147–159 (RTPVLMNFMMRGS). The helical transmembrane segment at 160 to 180 (WVTIGVTFAAMVGAGMLVRSI) threads the bilayer. Residues 181–190 (PYDQSPGPKH) lie on the Mitochondrial intermembrane side of the membrane. Residues 191–211 (LAWLLHSGVMGAVVAPLTILG) traverse the membrane as a helical segment. Residues 212 to 213 (GP) lie on the Mitochondrial matrix side of the membrane. A helical membrane pass occupies residues 214 to 234 (LLIRAAWYTAGIVGGLSTVAM). Topologically, residues 235–244 (CAPSEKFLNM) are mitochondrial intermembrane. Residues 245 to 265 (GAPLGVGLGLVFVSSLGSMFL) form a helical membrane-spanning segment. Residues 266–271 (PPTTVA) are Mitochondrial matrix-facing. The helical transmembrane segment at 272-292 (GATLYSVAMYGGLVLFSMFLL) threads the bilayer. Topologically, residues 293–345 (YDTQKVIKRAEVSPMYGVQKYDPINSMLSIYMDTLNIFMRVATMLATGGNRKK) are mitochondrial intermembrane.

The protein belongs to the BI1 family. Interacts with LETM1. Interacts with AFG3L2. Undergoes AFG3L2-mediated proteolytic degradation, upon hyperpolarization of mitochondria.

It localises to the mitochondrion inner membrane. It carries out the reaction Ca(2+)(in) + 2 H(+)(out) = Ca(2+)(out) + 2 H(+)(in). The enzyme catalyses K(+)(in) + H(+)(out) = K(+)(out) + H(+)(in). Plays an important role in maintenance of mitochondrial morphology and in mediating either calcium or potassium/proton antiport. Mediates proton-dependent calcium efflux from mitochondrion. Also functions as an electroneutral mitochondrial proton/potassium exchanger. Required for the mitochondrial tubular network and cristae organization. Involved in apoptotic release of cytochrome c. Inhibits the proteolytic activity of AFG3L2, stimulating respiration and stabilizing respiratory enzymes in actively respiring mitochondria. However, when mitochondria become hyperpolarized, GHITM loses its inhibitory activity toward AFG3L2 and the now the active AFG3L2 turns first on GHITM and, if hyperpolarization persists, on other proteins of the mitochondria, leading to a broad remodeling of the mitochondrial proteome. This Homo sapiens (Human) protein is Growth hormone-inducible transmembrane protein (GHITM).